Consider the following 267-residue polypeptide: Strigolactone esterase RMS3 (267 aa).

Ser-96 (nucleophile) is an active-site residue. Catalysis depends on residues Asp-218 and His-247.

This sequence belongs to the AB hydrolase superfamily.

Its subcellular location is the cytoplasm. The protein localises to the nucleus. Involved in strigolactone signaling pathway. Functions downstream of strigolactone synthesis, as a component of hormone signaling and as an enzyme that participates in the conversion of strigolactones to the bioactive form. Binds and hydrolyzes the synthetic strigolactone analog GR24 and its enantiomers in vitro. Forms a stable covalent complex with the D-ring of strigolactone, which is essential for hormone bioactivity. The D-ring is attached to His-247 of the catalytic triad. The hydrolysis of strigolactone into a covalently linked intermediate molecule is required to trigger strigolactone signaling. This mechanism defines RMS3 as a non-canonical hormone receptor with dual functions to generate and sense the active form of strigolactone. Strigolactones are hormones that inhibit tillering and shoot branching through the MAX-dependent pathway, contribute to the regulation of shoot architectural response to phosphate-limiting conditions and function as rhizosphere signal that stimulates hyphal branching of arbuscular mycorrhizal fungi and trigger seed germination of root parasitic weeds. This chain is Strigolactone esterase RMS3, found in Pisum sativum (Garden pea).